Reading from the N-terminus, the 240-residue chain is MAAEQLNGYVLHRRAYRETSFLVNIFTLENGKVSAVVKGVRGSKSDKKSLLQPFQPLLIGVSGRSELKNLQQVESTGAMIRLAGQALYCALYLNEVLNRVLADEIPHPEIFVLYQQSMHALVAQTNFEPVLRSFELGLLDALGYGIDLTHDADTGQPVADNGYYRIVPELGCVYQGDIRLSGCYSGQSLLNVASENWDKDSLLAAKHITRTTLGELLGSKPLMSRELFKQTHFKSRGREL.

It belongs to the RecO family.

Involved in DNA repair and RecF pathway recombination. This is DNA repair protein RecO from Pseudoalteromonas atlantica (strain T6c / ATCC BAA-1087).